A 179-amino-acid chain; its full sequence is Large ribosomal subunit protein uL5 (179 aa).

This sequence belongs to the universal ribosomal protein uL5 family. As to quaternary structure, part of the 50S ribosomal subunit; part of the 5S rRNA/L5/L18/L25 subcomplex. Contacts the 5S rRNA and the P site tRNA. Forms a bridge to the 30S subunit in the 70S ribosome.

This is one of the proteins that bind and probably mediate the attachment of the 5S RNA into the large ribosomal subunit, where it forms part of the central protuberance. In the 70S ribosome it contacts protein S13 of the 30S subunit (bridge B1b), connecting the 2 subunits; this bridge is implicated in subunit movement. Contacts the P site tRNA; the 5S rRNA and some of its associated proteins might help stabilize positioning of ribosome-bound tRNAs. This Prochlorococcus marinus (strain AS9601) protein is Large ribosomal subunit protein uL5.